The primary structure comprises 460 residues: Serine incorporator 5 (460 aa).

The Extracellular portion of the chain corresponds to 1–36 (MSARCCAGQLACCCGSAGCALCCGCCPKFRQSRSTR). Residues 37-57 (FMYLFYFTLVIIPCCVMMSPS) traverse the membrane as a helical segment. At 58 to 89 (VMKQMTEHIPFFEDFCKGIKAGDTCENLVGYS) the chain is on the cytoplasmic side. A helical transmembrane segment spans residues 90 to 110 (AVYRVCFGMACFFFVFCVLTF). The Extracellular portion of the chain corresponds to 111-124 (KVNNSKSCRASIHN). N-linked (GlcNAc...) asparagine glycosylation is present at N113. The chain crosses the membrane as a helical span at residues 125–145 (GFWFFKLLLLGAMCSGAFFIP). Residues 146 to 156 (DQETFLNVWRY) are Cytoplasmic-facing. Residues 157–177 (VGAVGSFFFICIQLLLIVEFA) traverse the membrane as a helical segment. Over 178-197 (HKWNKNWTAGTVRNKLWYAS) the chain is Extracellular. An N-linked (GlcNAc...) asparagine glycan is attached at N183. A helical membrane pass occupies residues 198-218 (LSLALIMYSIAVGGLALMAVF). The Cytoplasmic portion of the chain corresponds to 219-229 (YTQWDDCMDNK). A helical membrane pass occupies residues 230–250 (ILLGVHGGLCVLISLAAISPC). Residues 251–258 (VQNRQPHS) lie on the Extracellular side of the membrane. The chain crosses the membrane as a helical span at residues 259-279 (GLLQPGLISCYVTYLTFSALT). The Cytoplasmic segment spans residues 280–309 (SKPEKVVKDEHGKNVTICVPDFGQDFRRDE). The chain crosses the membrane as a helical span at residues 310 to 330 (SMVTWLGTLLLVVCISYSCLT). At 331–390 (STTRSSSDALQRRYGAPELEVARCCFCFGPDGEDTEEQQNVKEGPRVIYDEKKGTVYSYS) the chain is on the extracellular side. The chain crosses the membrane as a helical span at residues 391-411 (YFHFVLLLASLYVMMTLTSWF). Over 412–427 (HYENATIETFFVGSWS) the chain is Cytoplasmic. A helical transmembrane segment spans residues 428-448 (IFWVKMASCWMCVLLYLWTLV). Over 449 to 460 (APLCCPSRQFSV) the chain is Extracellular.

The protein belongs to the TDE1 family. In terms of tissue distribution, brain. Expressed at high levels in the white matter and the oligodendroglial cells of the brain. Expressed at low levels in the liver.

It localises to the cell membrane. It carries out the reaction a 1,2-diacyl-sn-glycero-3-phospho-L-serine(in) = a 1,2-diacyl-sn-glycero-3-phospho-L-serine(out). The enzyme catalyses a 1,2-diacyl-sn-glycero-3-phosphocholine(in) = a 1,2-diacyl-sn-glycero-3-phosphocholine(out). It catalyses the reaction a 1,2-diacyl-sn-glycero-3-phosphoethanolamine(in) = a 1,2-diacyl-sn-glycero-3-phosphoethanolamine(out). In terms of biological role, restriction factor required to restrict infectivity of gammaretroviruses: acts by inhibiting an early step of viral infection. Impairs the penetration of the viral particle into the cytoplasm. Non-ATP-dependent, non-specific lipid transporter for phosphatidylserine, phosphatidylcholine, and phosphatidylethanolamine. Functions as a scramblase that flips lipids in both directions across the membrane. Phospholipid scrambling results in gammaretroviral surface exposure of phosphatidylserine and loss of membrane asymmetry, which leads to loss of infectivity. Enhances the incorporation of serine into phosphatidylserine and sphingolipids. May play a role in providing serine molecules for the formation of myelin glycosphingolipids in oligodendrocytes. This chain is Serine incorporator 5 (Serinc5), found in Rattus norvegicus (Rat).